The following is a 227-amino-acid chain: MKKLTVTFLTFISIFFAATAAFAENRPILNTINYQQQVEKWVTTDSADVMVSVNVTTKEKKFDALQHQVMKKLEELSDGRQWHIDSFSMSQDQSGLEVLSWEVRSRMPLALVNSLRQKIDSLSQAGQQYKIQNVDFEPSLVEKEKAFAELRQRVYDQVKVELDNLNKSFPNGHYFLHSIDFVSPPLYAANQKELTLMRSAPSEKTAVTLGRNLMLIANVKVATFLNK.

Residues 1–23 (MKKLTVTFLTFISIFFAATAAFA) form the signal peptide.

This is an uncharacterized protein from Coxiella burnetii (strain RSA 493 / Nine Mile phase I).